The sequence spans 290 residues: Nucleotide-binding protein Clos_0574 (290 aa).

8 to 15 (GLSGAGKS) contacts ATP. A GTP-binding site is contributed by 59 to 62 (DIRG).

The protein belongs to the RapZ-like family.

Its function is as follows. Displays ATPase and GTPase activities. This chain is Nucleotide-binding protein Clos_0574, found in Alkaliphilus oremlandii (strain OhILAs) (Clostridium oremlandii (strain OhILAs)).